Here is a 363-residue protein sequence, read N- to C-terminus: Probable tRNA pseudouridine synthase D (363 aa).

D82 serves as the catalytic Nucleophile. One can recognise a TRUD domain in the interval 151-363 (YLPAYIGYQR…IARTDPRLFT (213 aa)).

Belongs to the pseudouridine synthase TruD family.

The enzyme catalyses uridine(13) in tRNA = pseudouridine(13) in tRNA. Functionally, could be responsible for synthesis of pseudouridine from uracil-13 in transfer RNAs. The chain is Probable tRNA pseudouridine synthase D from Sulfurisphaera tokodaii (strain DSM 16993 / JCM 10545 / NBRC 100140 / 7) (Sulfolobus tokodaii).